A 371-amino-acid polypeptide reads, in one-letter code: Probable dual-specificity RNA methyltransferase RlmN (371 aa).

Glutamate 113 functions as the Proton acceptor in the catalytic mechanism. One can recognise a Radical SAM core domain in the interval 119–352 (QSWGNSVCVT…TTVRREMGGE (234 aa)). The cysteines at positions 126 and 357 are disulfide-linked. Positions 133, 137, and 140 each coordinate [4Fe-4S] cluster. S-adenosyl-L-methionine is bound by residues 182–183 (GE), serine 214, 237–239 (SLH), and asparagine 313. The active-site S-methylcysteine intermediate is cysteine 357.

This sequence belongs to the radical SAM superfamily. RlmN family. Requires [4Fe-4S] cluster as cofactor.

It localises to the cytoplasm. The enzyme catalyses adenosine(2503) in 23S rRNA + 2 reduced [2Fe-2S]-[ferredoxin] + 2 S-adenosyl-L-methionine = 2-methyladenosine(2503) in 23S rRNA + 5'-deoxyadenosine + L-methionine + 2 oxidized [2Fe-2S]-[ferredoxin] + S-adenosyl-L-homocysteine. It catalyses the reaction adenosine(37) in tRNA + 2 reduced [2Fe-2S]-[ferredoxin] + 2 S-adenosyl-L-methionine = 2-methyladenosine(37) in tRNA + 5'-deoxyadenosine + L-methionine + 2 oxidized [2Fe-2S]-[ferredoxin] + S-adenosyl-L-homocysteine. Functionally, specifically methylates position 2 of adenine 2503 in 23S rRNA and position 2 of adenine 37 in tRNAs. The sequence is that of Probable dual-specificity RNA methyltransferase RlmN from Symbiobacterium thermophilum (strain DSM 24528 / JCM 14929 / IAM 14863 / T).